The sequence spans 528 residues: Cytochrome P450 1A5 (528 aa).

Position 467 (Cys467) interacts with heme.

The protein belongs to the cytochrome P450 family. The cofactor is heme.

Its subcellular location is the endoplasmic reticulum membrane. The protein resides in the microsome membrane. It catalyses the reaction an organic molecule + reduced [NADPH--hemoprotein reductase] + O2 = an alcohol + oxidized [NADPH--hemoprotein reductase] + H2O + H(+). Functionally, cytochromes P450 are a group of heme-thiolate monooxygenases. In liver microsomes, this enzyme is involved in an NADPH-dependent electron transport pathway. It oxidizes a variety of structurally unrelated compounds, including steroids, fatty acids, and xenobiotics. In Gallus gallus (Chicken), this protein is Cytochrome P450 1A5 (CYP1A5).